The following is a 72-amino-acid chain: Large ribosomal subunit protein bL31 (72 aa).

4 residues coordinate Zn(2+): Cys-16, Cys-18, Cys-37, and Cys-40.

It belongs to the bacterial ribosomal protein bL31 family. Type A subfamily. In terms of assembly, part of the 50S ribosomal subunit. Requires Zn(2+) as cofactor.

Its function is as follows. Binds the 23S rRNA. This Hahella chejuensis (strain KCTC 2396) protein is Large ribosomal subunit protein bL31.